The chain runs to 353 residues: uncharacterized protein (353 aa).

The span at 233–245 (ASCSNNEPSASLE) shows a compositional bias: polar residues. Positions 233 to 265 (ASCSNNEPSASLESESRHFSPVNSLSPSSLSTD) are disordered. Over residues 252–263 (SPVNSLSPSSLS) the composition is skewed to low complexity.

This is an uncharacterized protein from Saccharomyces cerevisiae (strain ATCC 204508 / S288c) (Baker's yeast).